Here is a 465-residue protein sequence, read N- to C-terminus: tRNA-2-methylthio-N(6)-dimethylallyladenosine synthase (465 aa).

The region spanning 26-141 is the MTTase N-terminal domain; sequence MRAHIITYGC…LPEALKANER (116 aa). Residues Cys-35, Cys-71, Cys-104, Cys-173, Cys-177, and Cys-180 each coordinate [4Fe-4S] cluster. The Radical SAM core domain occupies 159–388; it reads PKGALSAHVT…IEKQKEWSYR (230 aa). One can recognise a TRAM domain in the interval 391 to 453; sequence LEWVGKTVEV…PHLLFGEVVG (63 aa).

The protein belongs to the methylthiotransferase family. MiaB subfamily. Monomer. [4Fe-4S] cluster is required as a cofactor.

The protein resides in the cytoplasm. The catalysed reaction is N(6)-dimethylallyladenosine(37) in tRNA + (sulfur carrier)-SH + AH2 + 2 S-adenosyl-L-methionine = 2-methylsulfanyl-N(6)-dimethylallyladenosine(37) in tRNA + (sulfur carrier)-H + 5'-deoxyadenosine + L-methionine + A + S-adenosyl-L-homocysteine + 2 H(+). Functionally, catalyzes the methylthiolation of N6-(dimethylallyl)adenosine (i(6)A), leading to the formation of 2-methylthio-N6-(dimethylallyl)adenosine (ms(2)i(6)A) at position 37 in tRNAs that read codons beginning with uridine. This chain is tRNA-2-methylthio-N(6)-dimethylallyladenosine synthase, found in Thermus thermophilus (strain ATCC 27634 / DSM 579 / HB8).